The following is a 244-amino-acid chain: Protein TIFY 10b (244 aa).

A Tify domain is found at 97–132 (QEPEKRQLTIFYGGKVLVFNDFPADKAKGLMQLASK). The interval 174–244 (QKPARANASD…AVVKPIERGQ (71 aa)) is disordered. The Jas motif lies at 185 to 210 (PIARKASLHRFLEKRKDRLNAKTPYQ). Positions 187–194 (ARKASLHR) match the Nuclear localization signal motif. Residues 194–204 (RFLEKRKDRLN) are compositionally biased toward basic and acidic residues.

This sequence belongs to the TIFY/JAZ family. As to quaternary structure, interacts with BHLH148. Interacts with COI1A and COI1B in a coronatine-dependent manner. Coronatine is an analog of jasmonoyl isoleucine (JA-Ile). In terms of processing, ubiquitinated. Targeted for degradation by the SCF(COI1) E3 ubiquitin ligase-proteasome pathway during jasmonate signaling.

Its subcellular location is the nucleus. Functionally, repressor of jasmonate responses. In Oryza sativa subsp. japonica (Rice), this protein is Protein TIFY 10b.